Reading from the N-terminus, the 198-residue chain is Small ribosomal subunit protein uS11 (198 aa).

Composition is skewed to low complexity over residues 1-11 (MSGTEAGAGEP) and 19-58 (EAAQPEAGAPDAGTPEASAPEAGAAQPEAGTQPEAGTAQP). 2 disordered regions span residues 1–72 (MSGT…TPAD) and 178–198 (DVTPIPHDTTRKKGGKRGRRV). A compositionally biased stretch (basic residues) spans 187 to 198 (TRKKGGKRGRRV).

The protein belongs to the universal ribosomal protein uS11 family. In terms of assembly, part of the 30S ribosomal subunit.

Functionally, located on the platform of the 30S subunit. The chain is Small ribosomal subunit protein uS11 from Cenarchaeum symbiosum (strain A).